A 377-amino-acid polypeptide reads, in one-letter code: Galactoside alpha-(1,2)-fucosyltransferase 1 (377 aa).

Topologically, residues 1–8 (MWTPSRRQ) are cytoplasmic. Residues 9 to 26 (LCLAFLLVCVLSAGSFFF) form a helical; Signal-anchor for type II membrane protein membrane-spanning segment. The Lumenal segment spans residues 27–377 (HLNGGNFFRN…WKPDSLFRLV (351 aa)). N-linked (GlcNAc...) asparagine glycosylation is found at asparagine 67, asparagine 303, and asparagine 329.

This sequence belongs to the glycosyltransferase 11 family. In terms of tissue distribution, in the adult, highly expressed in pancreas, testis and epididymis and to a lesser extent in thymus, lung, stomach, small intestine, colon, spleen and uterus. Not expressed in brain, heart, skeletal muscle, kidney, liver and bone marrow. Expressed in epididymis and testis.

The protein resides in the golgi apparatus. It is found in the golgi stack membrane. It catalyses the reaction a beta-D-galactosyl-(1-&gt;4)-N-acetyl-beta-D-glucosaminyl derivative + GDP-beta-L-fucose = an alpha-L-Fuc-(1-&gt;2)-beta-D-Gal-(1-&gt;4)-beta-D-GlcNAc derivative + GDP + H(+). It carries out the reaction a ganglioside GA1 + GDP-beta-L-fucose = a ganglioside Fuc-GA1 + GDP + H(+). The catalysed reaction is a beta-D-Gal-(1-&gt;3)-beta-D-GlcNAc-(1-&gt;3)-beta-D-Gal-(1-&gt;4)-beta-D-Glc-(1&lt;-&gt;1')-Cer(d18:1(4E)) + GDP-beta-L-fucose = alpha-L-fucosyl-(1-&gt;2)- beta-D-galactosyl-(1-&gt;3)-N-acetyl-beta-D-glucosaminyl-(1-&gt;3)-beta-D-galactosyl-(1-&gt;4)-beta-D-glucosyl-(1&lt;-&gt;1')-N-acylsphing-4-enine + GDP + H(+). The enzyme catalyses a neolactoside nLc4Cer(d18:1(4E)) + GDP-beta-L-fucose = a neolactoside IV(2)-alpha-Fuc-nLc4Cer(d18:1(4E)) + GDP + H(+). It catalyses the reaction a ganglioside GM1 + GDP-beta-L-fucose = a ganglioside Fuc-GM1 + GDP + H(+). It carries out the reaction beta-D-galactosyl-(1-&gt;3)-N-acetyl-D-galactosamine + GDP-beta-L-fucose = alpha-L-fucosyl-(1-&gt;2)-beta-D-galactosyl-(1-&gt;3)-N-acetyl-D-galactosamine + GDP + H(+). The protein operates within protein modification; protein glycosylation. Its function is as follows. Catalyzes the transfer of L-fucose, from a guanosine diphosphate-beta-L-fucose, to the terminal galactose residue of glycoconjugates through an alpha(1,2) linkage leading to H antigen synthesis that is an intermediate substrate in the synthesis of ABO blood group antigens. H antigen is essential for maturation of the glomerular layer of the main olfactory bulb, in cell migration and early cell-cell contacts during tumor associated angiogenesis. Preferentially fucosylates soluble lactose and to a lesser extent, fucosylates glycolipids gangliosides GA1 and GM1a. This chain is Galactoside alpha-(1,2)-fucosyltransferase 1, found in Mus musculus (Mouse).